A 113-amino-acid polypeptide reads, in one-letter code: Large ribosomal subunit protein eL34 (113 aa).

The protein belongs to the eukaryotic ribosomal protein eL34 family.

This is Large ribosomal subunit protein eL34 from Methanopyrus kandleri (strain AV19 / DSM 6324 / JCM 9639 / NBRC 100938).